Reading from the N-terminus, the 966-residue chain is Catenin alpha-2 (966 aa).

Over residues 924–940 (PEKKPLVKREKPEEYQT) the composition is skewed to basic and acidic residues. The interval 924–952 (PEKKPLVKREKPEEYQTRVRRGSQKKHIS) is disordered. Positions 941–951 (RVRRGSQKKHI) are enriched in basic residues.

This sequence belongs to the vinculin/alpha-catenin family.

Its subcellular location is the cell membrane. It is found in the cytoplasm. The protein localises to the cytoskeleton. It localises to the cell junction. The protein resides in the adherens junction. Its subcellular location is the cell projection. It is found in the axon. The protein localises to the nucleus. May function as a linker between cadherin adhesion receptors and the cytoskeleton to regulate cell-cell adhesion and differentiation in the nervous system. This Xenopus tropicalis (Western clawed frog) protein is Catenin alpha-2 (ctnna2).